Consider the following 92-residue polypeptide: Cell division protein FtsB (92 aa).

The Cytoplasmic portion of the chain corresponds to Met1–Phe3. Residues Phe4–Phe21 traverse the membrane as a helical segment. Topologically, residues Gly22–Gln92 are periplasmic. The stretch at Leu40–Asn73 forms a coiled coil.

The protein belongs to the FtsB family. Part of a complex composed of FtsB, FtsL and FtsQ.

Its subcellular location is the cell inner membrane. Essential cell division protein. May link together the upstream cell division proteins, which are predominantly cytoplasmic, with the downstream cell division proteins, which are predominantly periplasmic. This Pseudoalteromonas translucida (strain TAC 125) protein is Cell division protein FtsB.